The sequence spans 1061 residues: E3 ubiquitin-protein ligase Smurf1 (1061 aa).

A C2 domain is found at 1-116; sequence MNKLDYPRRN…KGAGFQRLDL (116 aa). Disordered regions lie at residues 143-176 and 188-496; these read SGNP…WEER and HATK…SGQR. Positions 167–200 constitute a WW 1 domain; sequence DSLPEGWEERRTDNGRVYYVNHATKSTQWDRPRQ. Composition is skewed to polar residues over residues 207–225 and 233–255; these read SHAT…NSGD and TRST…SVTA. Ser-262 is modified (phosphoserine). Residues 264–273 show a composition bias toward polar residues; the sequence is EILSSVGKEN. Composition is skewed to low complexity over residues 274–300 and 311–322; these read TSPT…SAGG and PATPTSSTTSAS. Residues 348-359 show a composition bias toward polar residues; the sequence is TPTSPTGQQNYV. The span at 360–378 shows a compositional bias: low complexity; the sequence is NGNAQNGSTSGNGSGQAAQ. The segment covering 379–392 has biased composition (polar residues); that stretch reads PQSASNGWTQEDAA. Positions 393-409 are enriched in low complexity; that stretch reads TTTSPSTTTSPPRHSQS. Thr-412 bears the Phosphothreonine mark. A Phosphoserine modification is found at Ser-416. Over residues 417–439 the composition is skewed to polar residues; sequence PPASVTPSANGNVHSPNANSTPA. A compositionally biased stretch (gly residues) spans 480-494; it reads RNGGTSGGGGGGGSG. WW domains lie at 513–546 and 561–594; these read LDLP…DPRI and GPLP…DPRL. Residues 513 to 602 are interaction with MAD; that stretch reads LDLPPGYEMR…RLSGSILQMI (90 aa). 2 stretches are compositionally biased toward low complexity: residues 608 to 617 and 624 to 656; these read PPTSAANAGT and TPAT…TNPP. Residues 608-661 are disordered; that stretch reads PPTSAANAGTPAPPSATPATPSAAAAVPPQATPASNATPTTLTTTTNPPHRIVP. The region spanning 723-1061 is the HECT domain; it reads RAKDMRKRLM…VEETCGFAVE (339 aa). The active-site Glycyl thioester intermediate is the Cys-1029.

In terms of assembly, interacts with phosphorylated MAD.

It catalyses the reaction S-ubiquitinyl-[E2 ubiquitin-conjugating enzyme]-L-cysteine + [acceptor protein]-L-lysine = [E2 ubiquitin-conjugating enzyme]-L-cysteine + N(6)-ubiquitinyl-[acceptor protein]-L-lysine.. It functions in the pathway protein modification; protein ubiquitination. Its function is as follows. E3 ubiquitin-protein ligase which accepts ubiquitin from an E2 ubiquitin-conjugating enzyme in the form of a thioester and then directly transfers the ubiquitin to targeted substrates. Down-regulates Dpp signaling after gastrulation by promoting MAD ubiquitination and subsequent degradation. The chain is E3 ubiquitin-protein ligase Smurf1 from Drosophila melanogaster (Fruit fly).